Reading from the N-terminus, the 357-residue chain is Peptide chain release factor 1 (357 aa).

Q235 carries the N5-methylglutamine modification.

It belongs to the prokaryotic/mitochondrial release factor family. Methylated by PrmC. Methylation increases the termination efficiency of RF1.

It localises to the cytoplasm. Peptide chain release factor 1 directs the termination of translation in response to the peptide chain termination codons UAG and UAA. The polypeptide is Peptide chain release factor 1 (Alkaliphilus metalliredigens (strain QYMF)).